Reading from the N-terminus, the 969-residue chain is Translation initiation factor IF-2 (969 aa).

The tract at residues 50–370 (SFASKSAPAN…QAPSVGGVRL (321 aa)) is disordered. Residues 54–76 (KSAPANGAKPGPAASARPGAKPT) are compositionally biased toward low complexity. Pro residues predominate over residues 77–87 (PGGPRPGPRTP). The span at 88 to 102 (APAASAPQAPAEQTA) shows a compositional bias: low complexity. Residues 112–124 (AVKPGPAPTPARP) show a composition bias toward pro residues. Residues 125–164 (AAPEAPAAKAAPEAPAQRPTPGGPRPGQQQQRPGAPAQGG) are compositionally biased toward low complexity. Pro residues predominate over residues 240 to 267 (PGGPRPSPGSMPPRPNPGAMPQRTPRPG). Over residues 269-340 (SAGGRPGRPG…GAAGAFGRPG (72 aa)) the composition is skewed to gly residues. The span at 344-353 (RRGRKSKRQK) shows a compositional bias: basic residues. The region spanning 465 to 636 (VRPPVVTVMG…AVLLTADAAL (172 aa)) is the tr-type G domain. The G1 stretch occupies residues 474-481 (GHVDHGKT). 474–481 (GHVDHGKT) contributes to the GTP binding site. The G2 stretch occupies residues 499 to 503 (GITQH). The segment at 524 to 527 (DTPG) is G3. GTP contacts are provided by residues 524 to 528 (DTPGH) and 578 to 581 (NKID). Residues 578 to 581 (NKID) are G4. The tract at residues 614–616 (SAK) is G5.

The protein belongs to the TRAFAC class translation factor GTPase superfamily. Classic translation factor GTPase family. IF-2 subfamily.

The protein localises to the cytoplasm. Its function is as follows. One of the essential components for the initiation of protein synthesis. Protects formylmethionyl-tRNA from spontaneous hydrolysis and promotes its binding to the 30S ribosomal subunits. Also involved in the hydrolysis of GTP during the formation of the 70S ribosomal complex. The polypeptide is Translation initiation factor IF-2 (Nocardia farcinica (strain IFM 10152)).